The following is a 258-amino-acid chain: Small ribosomal subunit protein uS2 (258 aa).

Residues Glu-234–Gln-258 form a disordered region. Positions Ala-236–Gln-258 are enriched in low complexity.

Belongs to the universal ribosomal protein uS2 family.

This chain is Small ribosomal subunit protein uS2, found in Desulfovibrio desulfuricans (strain ATCC 27774 / DSM 6949 / MB).